We begin with the raw amino-acid sequence, 846 residues long: Neurofilament medium polypeptide (846 aa).

Residues 1–10 (MSYTLDSLGN) are compositionally biased toward polar residues. The disordered stretch occupies residues 1–52 (MSYTLDSLGNPSAYRRVPTETRSSFSRVSGSPSSGFRSQSWSRGSPSTVSSS). An N-acetylserine modification is found at Ser-2. The head stretch occupies residues 2–104 (SYTLDSLGNP…LSRSNEKEQL (103 aa)). The segment covering 22–45 (RSSFSRVSGSPSSGFRSQSWSRGS) has biased composition (low complexity). Residue Ser-31 is modified to Phosphoserine. Arg-43 carries the omega-N-methylarginine modification. The O-linked (GlcNAc) threonine glycan is linked to Thr-48. Ser-98 carries the phosphoserine modification. The IF rod domain maps to 100–411 (EKEQLQGLND…KLLEGEETRF (312 aa)). Positions 104-135 (LQGLNDRFAGYIEKVHYLEQQNKEIEAEIHAL) are coil 1A. Residues 136–148 (RQKQASHAQLGDA) are linker 1. Residues 149–247 (YDQEIRELRA…EEEVADLLAQ (99 aa)) form a coil 1B region. Ser-225 carries the post-translational modification Phosphoserine. The segment at 248–264 (IQASHITVERKDYLKTD) is linker 12. Residues 265–286 (ISTALKEIRSQLECHSDQNMHQ) form a coil 2A region. Residues 287–290 (AEEW) form a linker 2 region. Residues 291–411 (FKCRYAKLTE…KLLEGEETRF (121 aa)) are coil 2B. A Phosphotyrosine modification is found at Tyr-319. A phosphoserine mark is found at Ser-345, Ser-417, and Ser-429. Positions 412–845 (STFSGSITGP…HAIVKEVTQG (434 aa)) are tail. An O-linked (GlcNAc) threonine glycan is attached at Thr-431. 2 positions are modified to phosphoserine: Ser-467 and Ser-483. The tract at residues 483 to 783 (SAKEEKEEAE…GEDRSDDKVV (301 aa)) is disordered. Over residues 489-499 (EEAEEKEEEPE) the composition is skewed to acidic residues. A compositionally biased stretch (basic and acidic residues) spans 500–510 (VEKSPVKSPEA). Ser-503 and Ser-507 each carry phosphoserine. Acidic residues predominate over residues 511–533 (KEEEEGEKEEEEEGQEEEEEEDE). A compositionally biased stretch (basic and acidic residues) spans 534–553 (GVKSDQAEEGGSEKEGSSEK). Ser-537, Ser-545, Ser-550, and Ser-551 each carry phosphoserine. Acidic residues predominate over residues 554-575 (DEGEQEEEGETEAEGEGEEAEA). At Thr-564 the chain carries Phosphothreonine. Over residues 576–603 (KEEKKTEGKVEEMAIKEEIKVEKPEKAK) the composition is skewed to basic and acidic residues. Phosphoserine occurs at positions 604, 609, 643, 667, 687, 713, 721, 751, and 767. Basic and acidic residues-rich tracts occupy residues 610–675 (PVEE…KAVE) and 687–709 (SLEKDTKEEKPQQQEKVKEKAEE). Composition is skewed to basic and acidic residues over residues 718–730 (GDKSPQESKKEDI) and 746–758 (TQEKGSGQEEEKG). A compositionally biased stretch (basic and acidic residues) spans 769–783 (AEEKKGEDRSDDKVV).

It belongs to the intermediate filament family. As to quaternary structure, forms heterodimers with NEFL; which can further hetero-oligomerize (in vitro). Forms heterodimers with INA (in vitro). There are a number of repeats of the tripeptide K-S-P, NFM is phosphorylated on a number of the serines in this motif. It is thought that phosphorylation of NFM results in the formation of interfilament cross bridges that are important in the maintenance of axonal caliber. Post-translationally, phosphorylation seems to play a major role in the functioning of the larger neurofilament polypeptides (NF-M and NF-H), the levels of phosphorylation being altered developmentally and coincidentally with a change in the neurofilament function. In terms of processing, phosphorylated in the head and rod regions by the PKC kinase PKN1, leading to the inhibition of polymerization. Expressed in the dorsal root ganglion neurons (at protein level).

The protein localises to the cytoplasm. It is found in the cytoskeleton. The protein resides in the cell projection. Its subcellular location is the axon. In terms of biological role, neurofilaments usually contain three intermediate filament proteins: NEFL, NEFM, and NEFH which are involved in the maintenance of neuronal caliber. May additionally cooperate with the neuronal intermediate filament proteins PRPH and INA to form neuronal filamentous networks. In Rattus norvegicus (Rat), this protein is Neurofilament medium polypeptide (Nefm).